The chain runs to 252 residues: MDKRLWVGVVSIFPEMFRAISDYGITSRAVKQGLLTLTCWNPRVYTEDRHQTVDDRPFGGGPGMVMKIKPLEGALADARQAAGGRKAKVIYLSPQGRQLTQAGVRELAEEEALILIAGRYEGIDERFIEEHVDEEWSIGDYVLSGGELPAMVLVDAVTRLLPGALGHADSAEEDSFTDGLLDCPHYTRPEVYADKRVPEVLLSGNHEHIRRWRLQQALGRTWERRADLLDSRSLSGEEQKLLAEYIRQRDDS.

Residues Gly-118 and 138–143 (IGDYVL) contribute to the S-adenosyl-L-methionine site.

The protein belongs to the RNA methyltransferase TrmD family. Homodimer.

Its subcellular location is the cytoplasm. The enzyme catalyses guanosine(37) in tRNA + S-adenosyl-L-methionine = N(1)-methylguanosine(37) in tRNA + S-adenosyl-L-homocysteine + H(+). Specifically methylates guanosine-37 in various tRNAs. The polypeptide is tRNA (guanine-N(1)-)-methyltransferase (Pseudomonas aeruginosa (strain UCBPP-PA14)).